A 327-amino-acid chain; its full sequence is Phenylalanine--tRNA ligase alpha subunit (327 aa).

Position 252 (Glu-252) interacts with Mg(2+).

It belongs to the class-II aminoacyl-tRNA synthetase family. Phe-tRNA synthetase alpha subunit type 1 subfamily. Tetramer of two alpha and two beta subunits. Mg(2+) serves as cofactor.

Its subcellular location is the cytoplasm. It catalyses the reaction tRNA(Phe) + L-phenylalanine + ATP = L-phenylalanyl-tRNA(Phe) + AMP + diphosphate + H(+). This is Phenylalanine--tRNA ligase alpha subunit from Tolumonas auensis (strain DSM 9187 / NBRC 110442 / TA 4).